Here is a 391-residue protein sequence, read N- to C-terminus: Glycerophosphocholine acyltransferase 1 (391 aa).

The Cytoplasmic portion of the chain corresponds to 1 to 66 (MSNNEDPINE…IAKQAEEHES (66 aa)). A helical transmembrane segment spans residues 67-87 (FINKVTHLLGVLGFGGFCFLL). At 88–92 (GARPQ) the chain is on the lumenal side. A helical transmembrane segment spans residues 93–113 (DIPYVYCLFFFIFVPLRWIYY). Residues 114-119 (RFKKWH) lie on the Cytoplasmic side of the membrane. Residues 120–140 (YFLLDFCYYANTIFLVDLLLY) traverse the membrane as a helical segment. Residues 141-144 (PKDE) lie on the Lumenal side of the membrane. The helical transmembrane segment at 145 to 165 (KLFMVCFSFAEGPLAWALIVW) threads the bilayer. Residues 166–172 (RCSLVFS) are Cytoplasmic-facing. A helical membrane pass occupies residues 173-193 (SVDKIVSVLIHLLPGLVFFTI). Residues 194 to 226 (RWWNPATFEAMHPEGTSGRASWPYVEDKSFLFT) lie on the Lumenal side of the membrane. The helical transmembrane segment at 227 to 247 (WLFLVPLVAYFLWQLLYFLIV) threads the bilayer. Residues 248–294 (NVLRRQRLLRDPEVMTSYRELSKKAQKANNVWWRLSGLLGDQNRMLM) are Cytoplasmic-facing. Residues 295–315 (YILLQALFTVATTALTVPIFL) form a helical membrane-spanning segment. Topologically, residues 316–318 (SYE) are lumenal. Residues 319-339 (LHAVFQILKVSAAVWNGGSFL) traverse the membrane as a helical segment. The Cytoplasmic segment spans residues 340 to 391 (LDVMPRQVILKEKKKSELQPAHIQQYHSEPKQDQSPNSMEIRMKTIHSAEEQ). The interval 354–391 (KSELQPAHIQQYHSEPKQDQSPNSMEIRMKTIHSAEEQ) is disordered. Residues 380–391 (IRMKTIHSAEEQ) show a composition bias toward basic and acidic residues.

It belongs to the GPC1 family.

Its subcellular location is the membrane. It carries out the reaction sn-glycerol 3-phosphocholine + an acyl-CoA = a monoacyl-sn-glycero-3-phosphocholine + CoA. The enzyme catalyses sn-glycero-3-phosphoethanolamine + an acyl-CoA = a monoacyl-sn-glycero-3-phosphoethanolamine + CoA. It catalyses the reaction sn-glycerol 3-phosphocholine + hexadecanoyl-CoA = hexadecanoyl-sn-glycero-3-phosphocholine + CoA. The catalysed reaction is (9Z)-hexadecenoyl-CoA + sn-glycerol 3-phosphocholine = (9Z-hexadecenoyl)-sn-glycero-3-phosphocholine + CoA. It carries out the reaction (9Z,12Z)-octadecadienoyl-CoA + sn-glycerol 3-phosphocholine = (9Z,12Z-octadecadienoyl)-sn-glycero-3-phosphocholine + CoA. The enzyme catalyses (12R)-hydroxy-(9Z)-octadecenoyl-CoA + sn-glycerol 3-phosphocholine = (12R-hydroxy-9Z-octadecenoyl)-sn-glycero-3-phosphocholine + CoA. It catalyses the reaction (9Z,12Z,15Z)-octadecatrienoyl-CoA + sn-glycerol 3-phosphocholine = (9Z,12Z,15Z-octadecatrienoyl)-sn-glycero-3-phosphocholine + CoA. The catalysed reaction is sn-glycerol 3-phosphocholine + (9Z)-octadecenoyl-CoA = (9Z-octadecenoyl)-sn-glycero-3-phosphocholine + CoA. Functionally, glycerophosphocholine acyltransferase (GPCAT) that utilizes acyl-CoA to acylate glycero-3-phosphocholine (GPC), forming lysophosphatidylcholine (LPC). Shows broad acyl specificities with a preference for 16:0-CoA, polyunsaturated acyl-CoA, and the hydroxylated ricinoleoyl-CoA. Also catalyzes the acylation of glycero-3-phosphoethanolamine (GPE) with acyl-CoA. In addition to acyl-CoA, GPCAT efficiently utilizes LPC and lysophosphatidylethanolamine (LPE) as acyl donors in the acylation of GPC. Contributes to the maintenance of phosphatidylcholine (PC) homeostasis and might also have specific functions in acyl editing of PC, such as transferring acyl groups modified at the sn-2 position of PC to the sn-1. This is Glycerophosphocholine acyltransferase 1 from Ricinus communis (Castor bean).